The primary structure comprises 838 residues: Urease (838 aa).

Positions 400–838 constitute a Urease domain; the sequence is GAIDCHVHFI…VPLSRNYFLF (439 aa). Residues His-405, His-407, and Lys-488 each contribute to the Ni(2+) site. Lys-488 carries the N6-carboxylysine modification. Substrate is bound at residue His-490. Ni(2+)-binding residues include His-517 and His-543. His-591 functions as the Proton donor in the catalytic mechanism. Asp-631 lines the Ni(2+) pocket.

This sequence in the C-terminal section; belongs to the metallo-dependent hydrolases superfamily. Urease alpha subunit family. As to quaternary structure, homohexamer. Other oligomeric forms may exist depending on pH and presence of salts. Requires Ni(2+) as cofactor. Post-translationally, carboxylation allows a single lysine to coordinate two nickel ions.

It catalyses the reaction urea + 2 H2O + H(+) = hydrogencarbonate + 2 NH4(+). It functions in the pathway nitrogen metabolism; urea degradation; CO(2) and NH(3) from urea (urease route): step 1/1. With respect to regulation, requires the three urease accessory proteins URED, UREF AND UREG for its activation. Urea hydrolase involved in nitrogen recycling from ureide, purine, and arginine catabolism. This Arabidopsis thaliana (Mouse-ear cress) protein is Urease.